The primary structure comprises 388 residues: Succinate--CoA ligase [ADP-forming] subunit beta (388 aa).

Residues 9–244 form the ATP-grasp domain; it reads KQLFAEYGLP…PSQEDEREAH (236 aa). Residues lysine 46, 53–55, glutamate 99, serine 102, and glutamate 107 each bind ATP; that span reads GRG. Mg(2+) contacts are provided by asparagine 199 and aspartate 213. Residues asparagine 264 and 321–323 contribute to the substrate site; that span reads GIV.

It belongs to the succinate/malate CoA ligase beta subunit family. Heterotetramer of two alpha and two beta subunits. It depends on Mg(2+) as a cofactor.

It catalyses the reaction succinate + ATP + CoA = succinyl-CoA + ADP + phosphate. The catalysed reaction is GTP + succinate + CoA = succinyl-CoA + GDP + phosphate. The protein operates within carbohydrate metabolism; tricarboxylic acid cycle; succinate from succinyl-CoA (ligase route): step 1/1. Functionally, succinyl-CoA synthetase functions in the citric acid cycle (TCA), coupling the hydrolysis of succinyl-CoA to the synthesis of either ATP or GTP and thus represents the only step of substrate-level phosphorylation in the TCA. The beta subunit provides nucleotide specificity of the enzyme and binds the substrate succinate, while the binding sites for coenzyme A and phosphate are found in the alpha subunit. The polypeptide is Succinate--CoA ligase [ADP-forming] subunit beta (Aliivibrio salmonicida (strain LFI1238) (Vibrio salmonicida (strain LFI1238))).